The following is a 601-amino-acid chain: Elongation factor 4 (601 aa).

Residues 7–189 (KHTRNFSIVA…AIVEKVPVPD (183 aa)) form the tr-type G domain. GTP is bound by residues 19-24 (DHGKST) and 136-139 (NKID).

This sequence belongs to the TRAFAC class translation factor GTPase superfamily. Classic translation factor GTPase family. LepA subfamily.

The protein localises to the cell membrane. The catalysed reaction is GTP + H2O = GDP + phosphate + H(+). In terms of biological role, required for accurate and efficient protein synthesis under certain stress conditions. May act as a fidelity factor of the translation reaction, by catalyzing a one-codon backward translocation of tRNAs on improperly translocated ribosomes. Back-translocation proceeds from a post-translocation (POST) complex to a pre-translocation (PRE) complex, thus giving elongation factor G a second chance to translocate the tRNAs correctly. Binds to ribosomes in a GTP-dependent manner. This is Elongation factor 4 from Clostridium novyi (strain NT).